The primary structure comprises 598 residues: Elongation factor 4 (598 aa).

The region spanning 4–186 (SHIRNFAIIA…AIVSRLPAPS (183 aa)) is the tr-type G domain. Residues 16-21 (DHGKST) and 133-136 (NKID) each bind GTP.

It belongs to the TRAFAC class translation factor GTPase superfamily. Classic translation factor GTPase family. LepA subfamily.

Its subcellular location is the cell inner membrane. It carries out the reaction GTP + H2O = GDP + phosphate + H(+). Its function is as follows. Required for accurate and efficient protein synthesis under certain stress conditions. May act as a fidelity factor of the translation reaction, by catalyzing a one-codon backward translocation of tRNAs on improperly translocated ribosomes. Back-translocation proceeds from a post-translocation (POST) complex to a pre-translocation (PRE) complex, thus giving elongation factor G a second chance to translocate the tRNAs correctly. Binds to ribosomes in a GTP-dependent manner. This is Elongation factor 4 from Ehrlichia chaffeensis (strain ATCC CRL-10679 / Arkansas).